A 277-amino-acid polypeptide reads, in one-letter code: Putative serine/threonine-protein kinase PRKY (277 aa).

Low complexity predominate over residues 1–12; it reads MEAPGPAQAAAA. The interval 1–40 is disordered; it reads MEAPGPAQAAAAESNSREVTEDAADWAPALCPSPEARSPE. Residues 49-277 form the Protein kinase domain; that stretch reads CDALVTMGTG…DFHVKTGRMM (229 aa). ATP is bound by residues 55 to 63 and lysine 78; that span reads MGTGTFGRV. Catalysis depends on aspartate 172, which acts as the Proton acceptor. Residue threonine 203 is modified to Phosphothreonine.

It belongs to the protein kinase superfamily. AGC Ser/Thr protein kinase family. cAMP subfamily. In terms of tissue distribution, ubiquitous.

The catalysed reaction is L-seryl-[protein] + ATP = O-phospho-L-seryl-[protein] + ADP + H(+). It carries out the reaction L-threonyl-[protein] + ATP = O-phospho-L-threonyl-[protein] + ADP + H(+). The protein is Putative serine/threonine-protein kinase PRKY (PRKY) of Homo sapiens (Human).